The primary structure comprises 464 residues: Glucan 1,3-beta-glucosidase 3 (464 aa).

It belongs to the glycosyl hydrolase 5 (cellulase A) family.

The catalysed reaction is Successive hydrolysis of beta-D-glucose units from the non-reducing ends of (1-&gt;3)-beta-D-glucans, releasing alpha-glucose.. The chain is Glucan 1,3-beta-glucosidase 3 (exg3) from Schizosaccharomyces pombe (strain 972 / ATCC 24843) (Fission yeast).